The chain runs to 302 residues: Pyridoxal 5'-phosphate synthase subunit PdxS (302 aa).

Asp32 is a binding site for D-ribose 5-phosphate. Catalysis depends on Lys89, which acts as the Schiff-base intermediate with D-ribose 5-phosphate. Residue Gly161 coordinates D-ribose 5-phosphate. Arg173 serves as a coordination point for D-glyceraldehyde 3-phosphate. D-ribose 5-phosphate is bound by residues Gly222 and 243–244; that span reads GS. The segment at 278–302 is disordered; the sequence is GIGKGMKGQSNEDLPDEEKLQGRGV.

It belongs to the PdxS/SNZ family. In terms of assembly, in the presence of PdxT, forms a dodecamer of heterodimers.

The catalysed reaction is aldehydo-D-ribose 5-phosphate + D-glyceraldehyde 3-phosphate + L-glutamine = pyridoxal 5'-phosphate + L-glutamate + phosphate + 3 H2O + H(+). It functions in the pathway cofactor biosynthesis; pyridoxal 5'-phosphate biosynthesis. Catalyzes the formation of pyridoxal 5'-phosphate from ribose 5-phosphate (RBP), glyceraldehyde 3-phosphate (G3P) and ammonia. The ammonia is provided by the PdxT subunit. Can also use ribulose 5-phosphate and dihydroxyacetone phosphate as substrates, resulting from enzyme-catalyzed isomerization of RBP and G3P, respectively. The sequence is that of Pyridoxal 5'-phosphate synthase subunit PdxS from Halorubrum lacusprofundi (strain ATCC 49239 / DSM 5036 / JCM 8891 / ACAM 34).